The sequence spans 155 residues: MMIDQNKIIGQEKNALLTHFNLDDVDKLVISLKKIGRENFDKVCILIKINKRIVFFHAGTQTTNENNLWIHKKANVVDKFDHSSLFEKAIYEENPDKFYINNGLSRRDYAIVGGGFPIGLESTGIIGSLIVSGLTDTEDHDLAYQALIDIQSQQS.

This sequence belongs to the UPF0303 family.

The polypeptide is UPF0303 protein lp_3613 (Lactiplantibacillus plantarum (strain ATCC BAA-793 / NCIMB 8826 / WCFS1) (Lactobacillus plantarum)).